The sequence spans 484 residues: Pre-glycoprotein polyprotein GP complex (484 aa).

The N-myristoyl glycine; by host moiety is linked to residue G2. At 2-17 the chain is on the extracellular side; the sequence is GQLVSFFQEIPNIIQE. A helical membrane pass occupies residues 18 to 33; it reads AINIALIAVSLIAILK. At 34 to 58 the chain is on the cytoplasmic side; it reads GLVNLWKSGLFQLLVFLILAGRSCS. A Zn(2+)-binding site is contributed by C57. Residues 59–423 are Extracellular-facing; that stretch reads FKIGRSTELQ…QGKTPITLVD (365 aa). 4 disulfides stabilise this stretch: C85–C225, C270–C283, C292–C301, and C355–C376. N-linked (GlcNAc...) asparagine; by host glycosylation is found at N88, N125, N178, and N218. 4 N-linked (GlcNAc...) asparagine; by host glycosylation sites follow: N356, N364, N381, and N386. Residues 424-444 traverse the membrane as a helical segment; the sequence is ICFWSTLFFTTTLFLHLVGFP. Topologically, residues 445–484 are cytoplasmic; that stretch reads THRHIQGEPCPLPHKLNSNGGCRCGRYPELKKPTTWHRKH. The Zn(2+) site is built by H446, H448, C454, H458, C466, C468, and H484.

The protein belongs to the arenaviridae GPC protein family. As to quaternary structure, interacts with glycoprotein G2. Part of the GP complex (GP-C) together with glycoprotein G1 and glycoprotein G2. The GP-complex interacts with protein Z, which interacts with ribonucleocapsid; these interactions may induce virion budding. In terms of assembly, homotrimer; disulfide-linked. In pre-fusion state, G1 homotrimers bind G2 homotrimers via ionic interactions. Part of the GP complex (GP-C) together with glycoprotein G2 and the stable signal peptide. The GP-complex interacts with protein Z, which interacts with ribonucleocapsid; these interactions may induce virion budding. Homotrimer. Interacts with the stable signal peptide. In pre-fusion state, G2 homotrimers bind G1 homotrimers via ionic interactions. Part of the GP complex (GP-C) together with glycoprotein G1 and the stable signal peptide. Acidification in the endosome triggers rearrangements, which ultimately leads to a 6 helix bundle formed by the two heptad repeat domains (HR1 and HR2) in post-fusion state. The GP-complex interacts with protein Z, which interacts with ribonucleocapsid; these interactions may induce virion budding. Specific enzymatic cleavages in vivo yield mature proteins. GP-C polyprotein is cleaved in the endoplasmic reticulum by the host protease MBTPS1. Only cleaved glycoprotein is incorporated into virions. Post-translationally, the SSP remains stably associated with the GP complex following cleavage by signal peptidase and plays crucial roles in the trafficking of GP through the secretory pathway. In terms of processing, myristoylation is necessary for GP2-mediated fusion activity.

The protein resides in the virion membrane. The protein localises to the host endoplasmic reticulum membrane. It is found in the host Golgi apparatus membrane. It localises to the host cell membrane. Functionally, functions as a cleaved signal peptide that is retained as the third component of the GP complex (GP-C). Helps to stabilize the spike complex in its native conformation. The SSP is required for efficient glycoprotein expression, post-translational maturation cleavage of G1 and G2, glycoprotein transport to the cell surface plasma membrane, formation of infectious virus particles, and acid pH-dependent glycoprotein-mediated cell fusion. Glycoprotein G1: Forms the virion spikes together with glycoprotein G2. The glycoprotein spike trimers are connected to the underlying matrix. Interacts with the host receptor leading to virus endocytosis. Its function is as follows. Forms the virion spikes together with glycoprotein G1. The glycoprotein spike trimers are connected to the underlying matrix. Class I viral fusion protein that directs fusion of viral and host endosomal membranes, leading to delivery of the nucleocapsid into the cytoplasm. Membrane fusion is mediated by irreversible conformational changes induced by acidification. This is Pre-glycoprotein polyprotein GP complex from Chapare mammarenavirus (isolate Human/Bolivia/810419/2003).